A 231-amino-acid chain; its full sequence is 7-cyano-7-deazaguanine synthase (231 aa).

ATP is bound at residue Phe-8–Leu-18. Positions 188, 197, 200, and 203 each coordinate Zn(2+).

Belongs to the QueC family. Zn(2+) serves as cofactor.

The catalysed reaction is 7-carboxy-7-deazaguanine + NH4(+) + ATP = 7-cyano-7-deazaguanine + ADP + phosphate + H2O + H(+). Its pathway is purine metabolism; 7-cyano-7-deazaguanine biosynthesis. Functionally, catalyzes the ATP-dependent conversion of 7-carboxy-7-deazaguanine (CDG) to 7-cyano-7-deazaguanine (preQ(0)). This is 7-cyano-7-deazaguanine synthase from Escherichia fergusonii (strain ATCC 35469 / DSM 13698 / CCUG 18766 / IAM 14443 / JCM 21226 / LMG 7866 / NBRC 102419 / NCTC 12128 / CDC 0568-73).